Here is a 389-residue protein sequence, read N- to C-terminus: MVAEAEVMHQPVPVLEVPYHRCVAKGVEEVAAAAAVAPPPVVEVEVAVQVPHMGLESAAGAPSISVDALQFVPSIRSGSFADIGPRRYMEDEHIRIDDLSAHLGSLLVCPLPSAFYGVFDGHGGLDAAAYMKRHAMRFLFEDSEFPQASQVDETYVQSVENSVRRAFLQADLALADDLDISRSSGTTALTALVFGRQLLVANAGDCRAVLCRRGVAMEMSRDHRANYAEECERVAASGGYIEDGYLNGVLSVTRALGDWDMKMPDGSISPLIAEPEFRQTMLTEDDEFLIMGCDGIWDVMTSQHAVSIVRRGLRQHDDPERCARELVMEAKRLETADNLTVIVVCFVSELGSPRQEQVGGQAGVARPRSCKSLSAEALCNLRSWLETDR.

The PPM-type phosphatase domain maps to 76–346; that stretch reads RSGSFADIGP…DNLTVIVVCF (271 aa). Mn(2+)-binding residues include aspartate 120, glycine 121, aspartate 294, and aspartate 337.

This sequence belongs to the PP2C family. Mg(2+) is required as a cofactor. The cofactor is Mn(2+).

It carries out the reaction O-phospho-L-seryl-[protein] + H2O = L-seryl-[protein] + phosphate. The enzyme catalyses O-phospho-L-threonyl-[protein] + H2O = L-threonyl-[protein] + phosphate. The sequence is that of Probable protein phosphatase 2C 47 from Oryza sativa subsp. japonica (Rice).